A 541-amino-acid polypeptide reads, in one-letter code: Valine N-monooxygenase 2 (541 aa).

Over Met-1–Thr-18 the chain is Cytoplasmic. The helical transmembrane segment at Ser-19–Ile-41 threads the bilayer. The Lumenal segment spans residues Lys-42–Pro-541. Residue Asn-277 is glycosylated (N-linked (GlcNAc...) asparagine). Cys-477 serves as a coordination point for heme. Asn-505 carries N-linked (GlcNAc...) asparagine glycosylation.

Belongs to the cytochrome P450 family. The cofactor is heme. As to expression, expressed in the epidermis, the next two cortex cell layers, the endodermis and the pericycle of leaf petioles. Strong expression around the laticifers among the phloem cells and in parenchymatic cells between the protoxylem and the metaxylem cells. In the leaves, preferentially expressed in the mesophyll cells adjacent to the epidermis.

Its subcellular location is the microsome membrane. The enzyme catalyses L-valine + 2 reduced [NADPH--hemoprotein reductase] + 2 O2 = (E)-2-methylpropanal oxime + 2 oxidized [NADPH--hemoprotein reductase] + CO2 + 3 H2O + 2 H(+). The catalysed reaction is L-valine + reduced [NADPH--hemoprotein reductase] + O2 = N-hydroxy-L-valine + oxidized [NADPH--hemoprotein reductase] + H2O + 2 H(+). It catalyses the reaction N-hydroxy-L-valine + reduced [NADPH--hemoprotein reductase] + O2 = N,N-dihydroxy-L-valine + oxidized [NADPH--hemoprotein reductase] + H2O + H(+). It carries out the reaction L-isoleucine + 2 reduced [NADPH--hemoprotein reductase] + 2 O2 = (1E,2S)-2-methylbutanal oxime + 2 oxidized [NADPH--hemoprotein reductase] + CO2 + 3 H2O + 2 H(+). The enzyme catalyses L-isoleucine + reduced [NADPH--hemoprotein reductase] + O2 = N-hydroxy-L-isoleucine + oxidized [NADPH--hemoprotein reductase] + H2O + 2 H(+). The catalysed reaction is N-hydroxy-L-isoleucine + reduced [NADPH--hemoprotein reductase] + O2 = N,N-dihydroxy-L-isoleucine + oxidized [NADPH--hemoprotein reductase] + H2O + H(+). Involved in the biosynthesis of the cyanogenic glucosides linamarin and lotaustralin. Can use L-valine or L-isoleucine as substrate. Catalyzes multi-step reactions starting with two successive N-hydroxylations using L-valine and L-isoleucine as substrates leading to the formation of N,N-dihydroxy-L-valine and N,N-dihydroxy-L-isoleucine, respectively; following spontaneous reactions lead to the production of (E)-2-methylpropanal oxime and (1E,2S)-2-methylbutanal oxime, respectively. This Manihot esculenta (Cassava) protein is Valine N-monooxygenase 2.